We begin with the raw amino-acid sequence, 536 residues long: uncharacterized protein (536 aa).

The SWIM-type zinc-finger motif lies at 71–98 (LFVIVKSGCSCPSGRICRHMLAVFLYVY). The stretch at 482–528 (YKEAARYLKKLRTLYKKAKKQKVWERYIQLLSSHYKRLRALQEELQK) forms a coiled coil.

This is an uncharacterized protein from Bacillus subtilis (strain 168).